Here is a 156-residue protein sequence, read N- to C-terminus: Crossover junction endodeoxyribonuclease RuvC (156 aa).

Residues Asp-7, Glu-66, and Asp-138 contribute to the active site. 3 residues coordinate Mg(2+): Asp-7, Glu-66, and Asp-138.

Belongs to the RuvC family. As to quaternary structure, homodimer which binds Holliday junction (HJ) DNA. The HJ becomes 2-fold symmetrical on binding to RuvC with unstacked arms; it has a different conformation from HJ DNA in complex with RuvA. In the full resolvosome a probable DNA-RuvA(4)-RuvB(12)-RuvC(2) complex forms which resolves the HJ. It depends on Mg(2+) as a cofactor.

It localises to the cytoplasm. The enzyme catalyses Endonucleolytic cleavage at a junction such as a reciprocal single-stranded crossover between two homologous DNA duplexes (Holliday junction).. Its function is as follows. The RuvA-RuvB-RuvC complex processes Holliday junction (HJ) DNA during genetic recombination and DNA repair. Endonuclease that resolves HJ intermediates. Cleaves cruciform DNA by making single-stranded nicks across the HJ at symmetrical positions within the homologous arms, yielding a 5'-phosphate and a 3'-hydroxyl group; requires a central core of homology in the junction. The consensus cleavage sequence is 5'-(A/T)TT(C/G)-3'. Cleavage occurs on the 3'-side of the TT dinucleotide at the point of strand exchange. HJ branch migration catalyzed by RuvA-RuvB allows RuvC to scan DNA until it finds its consensus sequence, where it cleaves and resolves the cruciform DNA. The chain is Crossover junction endodeoxyribonuclease RuvC from Ehrlichia chaffeensis (strain ATCC CRL-10679 / Arkansas).